A 117-amino-acid polypeptide reads, in one-letter code: Immunoglobulin heavy variable 1-69 (117 aa).

An N-terminal signal peptide occupies residues 1–19; it reads MDWTWRFLFVVAAATGVQS. Pyrrolidone carboxylic acid is present on Q20. The framework-1 stretch occupies residues 20–44; the sequence is QVQLVQSGAEVKKPGSSVKVSCKAS. In terms of domain architecture, Ig-like spans 20-117; sequence QVQLVQSGAE…EDTAVYYCAR (98 aa). Residues C41 and C115 are joined by a disulfide bond. A complementarity-determining-1 region spans residues 45–52; the sequence is GGTFSSYA. A framework-2 region spans residues 53-69; that stretch reads ISWVRQAPGQGLEWMGG. Positions 70-77 are complementarity-determining-2; that stretch reads IIPIFGTA. The segment at 78-115 is framework-3; it reads NYAQKFQGRVTITADKSTSTAYMELSSLRSEDTAVYYC. The complementarity-determining-3 stretch occupies residues 116–117; it reads AR.

As to quaternary structure, immunoglobulins are composed of two identical heavy chains and two identical light chains; disulfide-linked.

It is found in the secreted. Its subcellular location is the cell membrane. In terms of biological role, v region of the variable domain of immunoglobulin heavy chains that participates in the antigen recognition. Immunoglobulins, also known as antibodies, are membrane-bound or secreted glycoproteins produced by B lymphocytes. In the recognition phase of humoral immunity, the membrane-bound immunoglobulins serve as receptors which, upon binding of a specific antigen, trigger the clonal expansion and differentiation of B lymphocytes into immunoglobulins-secreting plasma cells. Secreted immunoglobulins mediate the effector phase of humoral immunity, which results in the elimination of bound antigens. The antigen binding site is formed by the variable domain of one heavy chain, together with that of its associated light chain. Thus, each immunoglobulin has two antigen binding sites with remarkable affinity for a particular antigen. The variable domains are assembled by a process called V-(D)-J rearrangement and can then be subjected to somatic hypermutations which, after exposure to antigen and selection, allow affinity maturation for a particular antigen. The polypeptide is Immunoglobulin heavy variable 1-69 (Homo sapiens (Human)).